Consider the following 428-residue polypeptide: UPF0229 protein YeaH (428 aa).

The span at 78–90 (GNDHFIQNDRIER) shows a compositional bias: basic and acidic residues. A disordered region spans residues 78-111 (GNDHFIQNDRIERPQGGGGGGSGSGQGQASQDGE). A compositionally biased stretch (gly residues) spans 92-103 (QGGGGGGSGSGQ).

This sequence belongs to the UPF0229 family.

This chain is UPF0229 protein YeaH, found in Salmonella paratyphi C (strain RKS4594).